Here is a 365-residue protein sequence, read N- to C-terminus: Aminomethyltransferase (365 aa).

The protein belongs to the GcvT family. The glycine cleavage system is composed of four proteins: P, T, L and H.

It catalyses the reaction N(6)-[(R)-S(8)-aminomethyldihydrolipoyl]-L-lysyl-[protein] + (6S)-5,6,7,8-tetrahydrofolate = N(6)-[(R)-dihydrolipoyl]-L-lysyl-[protein] + (6R)-5,10-methylene-5,6,7,8-tetrahydrofolate + NH4(+). Functionally, the glycine cleavage system catalyzes the degradation of glycine. The chain is Aminomethyltransferase from Yersinia enterocolitica serotype O:8 / biotype 1B (strain NCTC 13174 / 8081).